The primary structure comprises 381 residues: Odorant receptor 46a, isoform A (381 aa).

Topologically, residues 1 to 37 are cytoplasmic; sequence MSKGVEIFYKGQKAFLNILSLWPQIERRWRIIHQVNY. The chain crosses the membrane as a helical span at residues 38–58; the sequence is VHVIVFWVLLFDLLLVLHVMA. The N-linked (GlcNAc...) asparagine glycan is linked to Asn-59. At 59 to 65 the chain is on the extracellular side; that stretch reads NLSYMSE. The helical transmembrane segment at 66-86 threads the bilayer; the sequence is VVKAIFILATSAGHTTKLLSI. Residues 87–127 lie on the Cytoplasmic side of the membrane; it reads KANNVQMEELFRRLDNEEFRPRGANEELIFAAACERSRKLR. A helical transmembrane segment spans residues 128–148; it reads DFYGALSFAALSMILIPQFAL. Residues 149-170 lie on the Extracellular side of the membrane; the sequence is DWSHLPLKTYNPLGENTGSPAY. Residues 171–191 form a helical membrane-spanning segment; that stretch reads WLLYCYQCLALSVSCITNIGF. Over 192-255 the chain is Cytoplasmic; that stretch reads DSLCSSLFIF…KTVERLLCKP (64 aa). A helical transmembrane segment spans residues 256-276; the sequence is ISVQIFCSVLVLTANFYAIAV. Residues 277-287 are Extracellular-facing; sequence LSDERLELFKY. The chain crosses the membrane as a helical span at residues 288 to 308; that stretch reads VTYQACMLIQIFILCYYAGEV. At 309–355 the chain is on the cytoplasmic side; the sequence is TQRSLDLPHELYKTSWVDWDYRSRRIALLFMQRLHSTLRIRTLNPSL. Residues 356 to 376 traverse the membrane as a helical segment; that stretch reads GFDLMLFSSIVNCSYSYFALL. Residues 377-381 are Extracellular-facing; that stretch reads KRVNS.

It belongs to the insect chemoreceptor superfamily. Heteromeric odorant receptor channel (TC 1.A.69) family. Or2a subfamily. In terms of assembly, interacts with Orco. Complexes exist early in the endomembrane system in olfactory sensory neurons (OSNs), coupling these complexes to the conserved ciliary trafficking pathway. Isoform A is expressed in a subset of 17 olfactory receptor neurons in the maxillary palp.

The protein localises to the cell membrane. Its function is as follows. Odorant receptor which mediates acceptance or avoidance behavior, depending on its substrates. The odorant receptor repertoire encodes a large collection of odor stimuli that vary widely in identity, intensity, and duration. May form a complex with Orco to form odorant-sensing units, providing sensitive and prolonged odorant signaling and calcium permeability. The protein is Odorant receptor 46a, isoform A (Or46a) of Drosophila melanogaster (Fruit fly).